A 980-amino-acid polypeptide reads, in one-letter code: Valine--tRNA ligase (980 aa).

The 'HIGH' region signature appears at 43-53; sequence PNVTGTLHMGH. The 'KMSKS' region motif lies at 586–590; it reads KMSKS. ATP is bound at residue Lys-589. Residues 914 to 978 adopt a coiled-coil conformation; that stretch reads LVDMDAERTR…QLTGLREQRA (65 aa).

It belongs to the class-I aminoacyl-tRNA synthetase family. ValS type 1 subfamily. In terms of assembly, monomer.

The protein resides in the cytoplasm. The enzyme catalyses tRNA(Val) + L-valine + ATP = L-valyl-tRNA(Val) + AMP + diphosphate. Catalyzes the attachment of valine to tRNA(Val). As ValRS can inadvertently accommodate and process structurally similar amino acids such as threonine, to avoid such errors, it has a 'posttransfer' editing activity that hydrolyzes mischarged Thr-tRNA(Val) in a tRNA-dependent manner. This chain is Valine--tRNA ligase, found in Xanthomonas euvesicatoria pv. vesicatoria (strain 85-10) (Xanthomonas campestris pv. vesicatoria).